Here is a 177-residue protein sequence, read N- to C-terminus: ATP synthase subunit delta (177 aa).

This sequence belongs to the ATPase delta chain family. In terms of assembly, F-type ATPases have 2 components, F(1) - the catalytic core - and F(0) - the membrane proton channel. F(1) has five subunits: alpha(3), beta(3), gamma(1), delta(1), epsilon(1). F(0) has three main subunits: a(1), b(2) and c(10-14). The alpha and beta chains form an alternating ring which encloses part of the gamma chain. F(1) is attached to F(0) by a central stalk formed by the gamma and epsilon chains, while a peripheral stalk is formed by the delta and b chains.

It localises to the cell inner membrane. Functionally, f(1)F(0) ATP synthase produces ATP from ADP in the presence of a proton or sodium gradient. F-type ATPases consist of two structural domains, F(1) containing the extramembraneous catalytic core and F(0) containing the membrane proton channel, linked together by a central stalk and a peripheral stalk. During catalysis, ATP synthesis in the catalytic domain of F(1) is coupled via a rotary mechanism of the central stalk subunits to proton translocation. Its function is as follows. This protein is part of the stalk that links CF(0) to CF(1). It either transmits conformational changes from CF(0) to CF(1) or is implicated in proton conduction. This Neisseria gonorrhoeae (strain ATCC 700825 / FA 1090) protein is ATP synthase subunit delta.